A 379-amino-acid chain; its full sequence is Protein psi1 (379 aa).

A J domain is found at 1 to 70; it reads MVADTKLYDC…RKLYDQYGIT (70 aa). 2 disordered regions span residues 69–95 and 176–205; these read ITEGNAAPPPPGAEGGPGAGFGGFPGA and FGGGGAGPHARRSHPSFGGSRPSQPPAQNE. Over residues 81 to 95 the composition is skewed to gly residues; the sequence is AEGGPGAGFGGFPGA.

Functionally, required for nuclear migration during mitosis. It is required for the normal initiation of translation. In Schizosaccharomyces pombe (strain 972 / ATCC 24843) (Fission yeast), this protein is Protein psi1 (psi1).